The sequence spans 180 residues: Adenine phosphoribosyltransferase (180 aa).

A2 carries the N-acetylalanine modification. Phosphoserine occurs at positions 15 and 30. Y60 carries the post-translational modification Phosphotyrosine. At S66 the chain carries Phosphoserine. The residue at position 114 (K114) is an N6-acetyllysine. At T135 the chain carries Phosphothreonine.

Belongs to the purine/pyrimidine phosphoribosyltransferase family. In terms of assembly, homodimer.

Its subcellular location is the cytoplasm. The enzyme catalyses AMP + diphosphate = 5-phospho-alpha-D-ribose 1-diphosphate + adenine. It functions in the pathway purine metabolism; AMP biosynthesis via salvage pathway; AMP from adenine: step 1/1. Functionally, catalyzes a salvage reaction resulting in the formation of AMP, that is energically less costly than de novo synthesis. This is Adenine phosphoribosyltransferase from Dipodillus campestris (North African gerbil).